The following is a 139-amino-acid chain: ATP synthase epsilon chain (139 aa).

It belongs to the ATPase epsilon chain family. As to quaternary structure, F-type ATPases have 2 components, CF(1) - the catalytic core - and CF(0) - the membrane proton channel. CF(1) has five subunits: alpha(3), beta(3), gamma(1), delta(1), epsilon(1). CF(0) has three main subunits: a, b and c.

The protein resides in the cell inner membrane. Produces ATP from ADP in the presence of a proton gradient across the membrane. In Serratia proteamaculans (strain 568), this protein is ATP synthase epsilon chain.